The following is a 262-amino-acid chain: Pyridoxine 5'-phosphate synthase (262 aa).

3-amino-2-oxopropyl phosphate is bound at residue Asn6. 8–9 lines the 1-deoxy-D-xylulose 5-phosphate pocket; the sequence is DH. Arg17 serves as a coordination point for 3-amino-2-oxopropyl phosphate. The active-site Proton acceptor is His43. Residues Arg45 and His50 each coordinate 1-deoxy-D-xylulose 5-phosphate. The active-site Proton acceptor is the Glu70. Thr102 is a 1-deoxy-D-xylulose 5-phosphate binding site. The Proton donor role is filled by His215. Residues Gly216 and 237 to 238 contribute to the 3-amino-2-oxopropyl phosphate site; that span reads GH.

It belongs to the PNP synthase family. Homooctamer; tetramer of dimers.

The protein resides in the cytoplasm. The catalysed reaction is 3-amino-2-oxopropyl phosphate + 1-deoxy-D-xylulose 5-phosphate = pyridoxine 5'-phosphate + phosphate + 2 H2O + H(+). The protein operates within cofactor biosynthesis; pyridoxine 5'-phosphate biosynthesis; pyridoxine 5'-phosphate from D-erythrose 4-phosphate: step 5/5. Functionally, catalyzes the complicated ring closure reaction between the two acyclic compounds 1-deoxy-D-xylulose-5-phosphate (DXP) and 3-amino-2-oxopropyl phosphate (1-amino-acetone-3-phosphate or AAP) to form pyridoxine 5'-phosphate (PNP) and inorganic phosphate. The polypeptide is Pyridoxine 5'-phosphate synthase (Helicobacter pylori (strain J99 / ATCC 700824) (Campylobacter pylori J99)).